A 256-amino-acid chain; its full sequence is Hemin import ATP-binding protein HmuV (256 aa).

Residues 2 to 238 form the ABC transporter domain; the sequence is ISAQNLVYSL…QALTMLYGAD (237 aa). 34 to 41 is a binding site for ATP; the sequence is GPNGAGKS.

It belongs to the ABC transporter superfamily. Heme (hemin) importer (TC 3.A.1.14.5) family. As to quaternary structure, the complex is composed of two ATP-binding proteins (HmuV), two transmembrane proteins (HmuU) and a solute-binding protein (HmuT).

The protein localises to the cell inner membrane. Part of the ABC transporter complex HmuTUV involved in hemin import. Responsible for energy coupling to the transport system. The sequence is that of Hemin import ATP-binding protein HmuV from Escherichia coli O6:K15:H31 (strain 536 / UPEC).